Here is a 238-residue protein sequence, read N- to C-terminus: Pyridoxine 5'-phosphate synthase (238 aa).

2 residues coordinate 3-amino-2-oxopropyl phosphate: Asn7 and Arg18. Residue His43 is the Proton acceptor of the active site. The 1-deoxy-D-xylulose 5-phosphate site is built by Arg45 and His50. The active-site Proton acceptor is Glu70. Thr100 contacts 1-deoxy-D-xylulose 5-phosphate. His190 (proton donor) is an active-site residue. Residues Asp191 and Gly213–His214 each bind 3-amino-2-oxopropyl phosphate.

Belongs to the PNP synthase family. In terms of assembly, homooctamer; tetramer of dimers.

The protein localises to the cytoplasm. The catalysed reaction is 3-amino-2-oxopropyl phosphate + 1-deoxy-D-xylulose 5-phosphate = pyridoxine 5'-phosphate + phosphate + 2 H2O + H(+). The protein operates within cofactor biosynthesis; pyridoxine 5'-phosphate biosynthesis; pyridoxine 5'-phosphate from D-erythrose 4-phosphate: step 5/5. Its function is as follows. Catalyzes the complicated ring closure reaction between the two acyclic compounds 1-deoxy-D-xylulose-5-phosphate (DXP) and 3-amino-2-oxopropyl phosphate (1-amino-acetone-3-phosphate or AAP) to form pyridoxine 5'-phosphate (PNP) and inorganic phosphate. This is Pyridoxine 5'-phosphate synthase from Parabacteroides distasonis (strain ATCC 8503 / DSM 20701 / CIP 104284 / JCM 5825 / NCTC 11152).